A 1852-amino-acid chain; its full sequence is Voltage-dependent L-type calcium channel subunit alpha-1S (1852 aa).

The interval 1–23 (MEPPSPQDEGLRKKQPKKPVPEI) is disordered. The Cytoplasmic segment spans residues 1 to 51 (MEPPSPQDEGLRKKQPKKPVPEILPRPPRALFCLTLQNPLRKACISIVEWK). Residues 38-337 (NPLRKACISI…LVLGVLSGEF (300 aa)) form an I repeat. A helical transmembrane segment spans residues 52–70 (PFETIILLTIFANCVALAV). Over 71–85 (YLPMPEDDNNTLNLG) the chain is Extracellular. An N-linked (GlcNAc...) asparagine glycan is attached at Asn79. Residues 86 to 106 (LEKLEYFFLIVFSIEAAMKII) form a helical membrane-spanning segment. Over 107–115 (AYGFLFHQD) the chain is Cytoplasmic. The chain crosses the membrane as a helical span at residues 116 to 136 (AYLRSGWNVLDFIIVFLGVFT). The Extracellular portion of the chain corresponds to 137–160 (VILEQVNIIQTNTAPMSSKGAGLD). A helical transmembrane segment spans residues 161–179 (VKALRAFRVLRPLRLVSGV). The Cytoplasmic portion of the chain corresponds to 180–196 (PSLQVVLNSIFKAMLPL). A helical membrane pass occupies residues 197–218 (FHIALLVLFMVIIYAIIGLELF). At 219–279 (KGKMHKTCYF…HGITHFDNFG (61 aa)) the chain is on the extracellular side. 2 disulfide bridges follow: Cys226–Cys254 and Cys245–Cys261. An N-linked (GlcNAc...) asparagine glycan is attached at Asn257. Positions 280–301 (FSMLTVYQCISMEGWTDVLYWV) form an intramembrane region, pore-forming. The Selectivity filter of repeat I motif lies at 290-293 (SMEG). Residue Glu292 coordinates Ca(2+). The Extracellular portion of the chain corresponds to 302-309 (NDAIGNEW). The helical transmembrane segment at 310 to 330 (PWIYFVTLILLGSFFILNLVL) threads the bilayer. Over 331–432 (GVLSGEFTKE…WKCHDLVKSK (102 aa)) the chain is Cytoplasmic. A binding to the beta subunit region spans residues 357-374 (QQLEEDLRGYMSWITQGE). 2 positions are modified to phosphoserine: Ser393 and Ser397. An II repeat occupies 418-664 (NRVFRWKCHD…VFLAIAVDNL (247 aa)). The helical transmembrane segment at 433-451 (VFYWLVILIVALNTLSIAS) threads the bilayer. Residues 452 to 462 (EHHNQPLWLTH) are Extracellular-facing. The chain crosses the membrane as a helical span at residues 463-483 (LQDVANRVLLTLFTIEMLMKM). The Cytoplasmic portion of the chain corresponds to 484-494 (YGLGLRQYFMS). The helical transmembrane segment at 495–514 (IFNRFDCFVVCSGILEILLV) threads the bilayer. Over 515 to 523 (ESGAMSPLG) the chain is Extracellular. A helical transmembrane segment spans residues 524 to 542 (ISVLRCIRLLRLFKITKYW). Residues 543–561 (TSLSNLVASLLNSIRSIAS) are Cytoplasmic-facing. Residues 562–581 (LLLLLFLFIIIFALLGMQLF) form a helical membrane-spanning segment. The Extracellular portion of the chain corresponds to 582-601 (GGRYDFEDTEVRRSNFDNFP). An intramembrane region (pore-forming) is located at residues 602–623 (QALISVFQVLTGEDWNSVMYNG). Positions 612 to 615 (TGED) match the Selectivity filter of repeat II motif. Glu614 provides a ligand contact to Ca(2+). Residues 624-633 (IMAYGGPTYP) lie on the Extracellular side of the membrane. Residues 634–653 (GVLVCIYFIILFVCGNYILL) form a helical membrane-spanning segment. At 654-799 (NVFLAIAVDN…VLCHRIVNAT (146 aa)) the chain is on the cytoplasmic side. Disordered stretches follow at residues 675–712 (KAKA…SKGE) and 731–757 (EVKD…VSPR). A Phosphoserine; by PKA modification is found at Ser687. Basic and acidic residues predominate over residues 690-711 (LPDKSEEERATVTKKLEQKSKG). The segment covering 742 to 751 (PGDDEEDEPE) has biased composition (acidic residues). One copy of the III repeat lies at 768–1068 (EKAVPIPEAS…IFVGFVIVTF (301 aa)). The helical transmembrane segment at 800 to 818 (WFTNFILLFILLSSAALAA) threads the bilayer. Over 819–830 (EDPIRADSMRNQ) the chain is Extracellular. Residues 831 to 850 (ILEYFDYVFTAVFTVEIVLK) traverse the membrane as a helical segment. Topologically, residues 851 to 866 (MTTYGAFLHKGSFCRN) are cytoplasmic. The chain crosses the membrane as a helical span at residues 867-885 (YFNILDLLVVAVSLISMGL). The Extracellular segment spans residues 886 to 892 (ESSAISV). A helical transmembrane segment spans residues 893–911 (VKILRVLRVLRPLRAINRA). At 912–930 (KGLKHVVQCVFVAIRTIGN) the chain is on the cytoplasmic side. A helical transmembrane segment spans residues 931–950 (IVLVTTLLQFMFACIGVQLF). Over 951–1000 (KGKFYSCNDLSKMTEEECRGYYYIYKDGDPTQIELRPRQWIHNDFHFDNV) the chain is Extracellular. Cys957 and Cys968 are joined by a disulfide. The dihydropyridine binding stretch occupies residues 988 to 1077 (RQWIHNDFHF…FQEQGETEYK (90 aa)). Positions 1001–1021 (LSAMMSLFTVSTFEGWPQLLY) form an intramembrane region, pore-forming. A Selectivity filter of repeat III motif is present at residues 1012-1015 (TFEG). Glu1014 is a Ca(2+) binding site. The Extracellular segment spans residues 1022-1038 (KAIDSNEEDTGPVYNNR). A helical membrane pass occupies residues 1039–1060 (VEMAIFFIIYIILIAFFMMNIF). At 1061-1118 (VGFVIVTFQEQGETEYKNCELDKNQRQCVQYALKARPLRCYIPKNPYQYQVWYVVTSS) the chain is on the cytoplasmic side. The IV repeat unit spans residues 1105 to 1384 (NPYQYQVWYV…LFVAVIMDNF (280 aa)). The helical transmembrane segment at 1119–1140 (YFEYLMFALIMLNTICLGMQHY) threads the bilayer. Asn1141 carries N-linked (GlcNAc...) asparagine glycosylation. Residues 1141–1148 (NQSEQMNH) lie on the Extracellular side of the membrane. The helical transmembrane segment at 1149 to 1170 (ISDILNVAFTIIFTLEMVLKLI) threads the bilayer. Topologically, residues 1171–1180 (AFKPRGYFGD) are cytoplasmic. The helical transmembrane segment at 1181–1200 (PWNVFDFLIVIGSIIDVILS) threads the bilayer. The Extracellular portion of the chain corresponds to 1201–1231 (EIDTFLASSGGLYCLGGGCGNVDPDESARIS). Residues 1232–1250 (SAFFRLFRVMRLVKLLNRA) traverse the membrane as a helical segment. Residues 1251–1268 (EGVRTLLWTFIKSFQALP) are Cytoplasmic-facing. The helical transmembrane segment at 1269–1289 (YVALLIVMLFFIYAVIGMQMF) threads the bilayer. The Extracellular portion of the chain corresponds to 1290-1311 (GKIAMVDGTQINRNNNFQTFPQ). Positions 1312 to 1330 (AVLLLFRCATGEAWQEILL) form an intramembrane region, pore-forming. The Selectivity filter of repeat IV motif lies at 1321-1324 (TGEA). Residues 1331–1356 (ACSYGKLCDPESDYAPGEEHTCGTNF) lie on the Extracellular side of the membrane. Residues 1337–1403 (LCDPESDYAP…LGPHHLDEFK (67 aa)) are dihydropyridine binding. Cys1338 and Cys1352 are disulfide-bonded. 2 phenylalkylamine binding regions span residues 1349–1391 (EHTC…TRDW) and 1349–1392 (EHTC…RDWS). The helical transmembrane segment at 1357-1381 (AYYYFISFYMLCAFLIINLFVAVIM) threads the bilayer. Over 1382-1852 (DNFDYLTRDW…PEGGAVPWEP (471 aa)) the chain is Cytoplasmic. Positions 1522 to 1542 (KFYATFLIQEHFRKFMKRQEE) are interaction with calmodulin. A Phosphoserine; by PKA and CAMK2 modification is found at Ser1575. Phosphothreonine is present on Thr1579. A Phosphoserine; by PKA modification is found at Ser1617. 2 disordered regions span residues 1702-1721 (GPLS…HVDK) and 1727-1762 (TQRG…PTSR). Positions 1747–1757 (KAEHPVQKEGK) are enriched in basic and acidic residues.

This sequence belongs to the calcium channel alpha-1 subunit (TC 1.A.1.11) family. CACNA1S subfamily. As to quaternary structure, component of a calcium channel complex consisting of a pore-forming alpha subunit (CACNA1S) and the ancillary subunits CACNB1 or CACNB2, CACNG1 and CACNA2D1. The channel complex contains alpha, beta, gamma and delta subunits in a 1:1:1:1 ratio, i.e. it contains either CACNB1 or CACNB2. CACNA1S channel activity is modulated by the auxiliary subunits (CACNB1 or CACNB2, CACNG1 and CACNA2D1). Interacts with DYSF and JSRP1. Interacts with RYR1. Interacts with STAC, STAC2 and STAC3 (via their SH3 domains). Interacts with CALM. In terms of processing, the alpha-1S subunit is found in two isoforms in the skeletal muscle: a minor form of 212 kDa containing the complete amino acid sequence, and a major form of 190 kDa derived from the full-length form by post-translational proteolysis close to Phe-1690. Post-translationally, phosphorylated. Phosphorylation by PKA activates the calcium channel. Both the minor and major forms are phosphorylated in vitro by PKA. Phosphorylation at Ser-1575 is involved in beta-adrenergic-mediated regulation of the channel.

It localises to the cell membrane. The protein resides in the sarcolemma. The protein localises to the T-tubule. The enzyme catalyses Ca(2+)(in) = Ca(2+)(out). With respect to regulation, channel activity is blocked by dihydropyridines (DHP), phenylalkylamines, and by benzothiazepines. Its function is as follows. Pore-forming, alpha-1S subunit of the voltage-gated calcium channel that gives rise to L-type calcium currents in skeletal muscle. Calcium channels containing the alpha-1S subunit play an important role in excitation-contraction coupling in skeletal muscle via their interaction with RYR1, which triggers Ca(2+) release from the sarcplasmic reticulum and ultimately results in muscle contraction. Long-lasting (L-type) calcium channels belong to the 'high-voltage activated' (HVA) group. This Mus musculus (Mouse) protein is Voltage-dependent L-type calcium channel subunit alpha-1S (Cacna1s).